Consider the following 377-residue polypeptide: Compound eye opsin BCRH2 (377 aa).

The Extracellular portion of the chain corresponds to 1-53; sequence MTNATGPQMAYYGAASMDFGYPEGVSIVDFVRPEIKPYVHQHWYNYPPVNPMW. The N-linked (GlcNAc...) asparagine glycan is linked to N3. A helical membrane pass occupies residues 54 to 78; the sequence is HYLLGVIYLFLGTVSIFGNGLVIYL. Topologically, residues 79-90 are cytoplasmic; it reads FNKSAALRTPAN. The helical transmembrane segment at 91-115 threads the bilayer; sequence ILVVNLALSDLIMLTTNVPFFTYNC. The Extracellular portion of the chain corresponds to 116–131; the sequence is FSGGVWMFSPQYCEIY. Residues C128 and C205 are joined by a disulfide bond. Residues 132 to 151 form a helical membrane-spanning segment; that stretch reads ACLGAITGVCSIWLLCMISF. The Cytoplasmic portion of the chain corresponds to 152 to 170; it reads DRYNIICNGFNGPKLTTGK. Residues 171 to 194 traverse the membrane as a helical segment; it reads AVVFALISWVIAIGCALPPFFGWG. The Extracellular segment spans residues 195 to 218; that stretch reads NYILEGILDSCSYDYLTQDFNTFS. A helical transmembrane segment spans residues 219-246; that stretch reads YNIFIFVFDYFLPAAIIVFSYVFIVKAI. Residues 247-281 are Cytoplasmic-facing; sequence FAHEAAMRAQAKKMNVSTLRSNEADAQRAEIRIAK. Residues 282-305 form a helical membrane-spanning segment; the sequence is TALVNVSLWFICWTPYALISLKGV. The Extracellular portion of the chain corresponds to 306–313; the sequence is MGDTSGIT. Residues 314-338 traverse the membrane as a helical segment; the sequence is PLVSTLPALLAKSCSCYNPFVYAIS. The residue at position 325 (K325) is an N6-(retinylidene)lysine. At 339-377 the chain is on the cytoplasmic side; sequence HPKYRLAITQHLPWFCVHETETKSNDDSQSNSTVAQDKA.

The protein belongs to the G-protein coupled receptor 1 family. Opsin subfamily. Post-translationally, phosphorylated on some or all of the serine and threonine residues present in the C-terminal region. In terms of tissue distribution, expressed in all of the seven retinular cells (R1-R7) forming the main rhabdom in each ommatidium.

It is found in the membrane. Its function is as follows. Visual pigments are the light-absorbing molecules that mediate vision. They consist of an apoprotein, opsin, covalently linked to cis-retinal. This opsin produces visual pigments with maximal absorption in the blue-green region of the spectrum. This is Compound eye opsin BCRH2 from Hemigrapsus sanguineus (Asian shore crab).